Consider the following 370-residue polypeptide: Probable trehalose-phosphate phosphatase 6 (370 aa).

This sequence belongs to the trehalose phosphatase family. Requires a divalent metal cation as cofactor.

The enzyme catalyses alpha,alpha-trehalose 6-phosphate + H2O = alpha,alpha-trehalose + phosphate. The protein operates within glycan biosynthesis; trehalose biosynthesis. Functionally, removes the phosphate from trehalose 6-phosphate to produce free trehalose. Trehalose accumulation in plant may improve abiotic stress tolerance. In Oryza sativa subsp. japonica (Rice), this protein is Probable trehalose-phosphate phosphatase 6 (TPP6).